The primary structure comprises 437 residues: Ribosomal protein uS12 methylthiotransferase RimO (437 aa).

The MTTase N-terminal domain maps to 4-114; that stretch reads PRVSFVSLGC…VMSAVHEAVP (111 aa). Residues Cys13, Cys49, Cys78, Cys145, Cys149, and Cys152 each contribute to the [4Fe-4S] cluster site. The Radical SAM core domain maps to 131-369; the sequence is LTPRHYAYLK…MAKQQQISTN (239 aa). One can recognise a TRAM domain in the interval 372-437; the sequence is KKKVGKRLPV…DAYDLHGIAV (66 aa).

It belongs to the methylthiotransferase family. RimO subfamily. Requires [4Fe-4S] cluster as cofactor.

The protein resides in the cytoplasm. It catalyses the reaction L-aspartate(89)-[ribosomal protein uS12]-hydrogen + (sulfur carrier)-SH + AH2 + 2 S-adenosyl-L-methionine = 3-methylsulfanyl-L-aspartate(89)-[ribosomal protein uS12]-hydrogen + (sulfur carrier)-H + 5'-deoxyadenosine + L-methionine + A + S-adenosyl-L-homocysteine + 2 H(+). In terms of biological role, catalyzes the methylthiolation of an aspartic acid residue of ribosomal protein uS12. The protein is Ribosomal protein uS12 methylthiotransferase RimO of Brucella anthropi (strain ATCC 49188 / DSM 6882 / CCUG 24695 / JCM 21032 / LMG 3331 / NBRC 15819 / NCTC 12168 / Alc 37) (Ochrobactrum anthropi).